We begin with the raw amino-acid sequence, 1068 residues long: Huntingtin-interacting protein 1-related protein (1068 aa).

M1 is subject to N-acetylmethionine. Residues 23-151 form the ENTH domain; sequence EREQFDKTQA…SFHLKHPQFP (129 aa). A coiled-coil region spans residues 347 to 599; the sequence is SVKDDRDLQI…RSSQEQGELQ (253 aa). 3 disordered regions span residues 424-443, 529-549, and 582-608; these read LEGERSQGLREEAERKASAT, ARAQEALSHTEQSKSELSSRL, and AALSREQQRSSQEQGELQGRLAERESQ. Composition is skewed to basic and acidic residues over residues 425–443 and 539–549; these read EGERSQGLREEAERKASAT and EQSKSELSSRL. Low complexity predominate over residues 590-600; the sequence is RSSQEQGELQG. An I/LWEQ domain is found at 771–1012; it reads SLDVRQEELG…ELRKQHYVLA (242 aa). The important for actin binding stretch occupies residues 867 to 924; that stretch reads RWTEGLISASKAVGWGATQLVEAADKVVLHTGKYEELIVCSHEIAASTAQLVAASKVK. Positions 1016–1060 are disordered; that stretch reads GSPGEEVAIRPSTAPRSVTTKKPPLAQKPSVAPRQDHQLDKKDGI. A Phosphoserine modification is found at S1017. Over residues 1049–1059 the composition is skewed to basic and acidic residues; the sequence is RQDHQLDKKDG.

Belongs to the SLA2 family. As to quaternary structure, homodimer. Interacts with actin; homodimerization promotes actin binding. Interacts with CLTB. Interacts with HIP1. Interacts (via ENTH and I/LWEQ domains) with BCL2L10. Brain, heart, kidney, pancreas, and liver, but not in lung or placenta.

It is found in the cytoplasm. It localises to the perinuclear region. The protein resides in the endomembrane system. The protein localises to the cytoplasmic vesicle. Its subcellular location is the clathrin-coated vesicle membrane. In terms of biological role, component of clathrin-coated pits and vesicles, that may link the endocytic machinery to the actin cytoskeleton. Binds 3-phosphoinositides (via ENTH domain). May act through the ENTH domain to promote cell survival by stabilizing receptor tyrosine kinases following ligand-induced endocytosis. The polypeptide is Huntingtin-interacting protein 1-related protein (HIP1R) (Homo sapiens (Human)).